Reading from the N-terminus, the 227-residue chain is N-acetyltransferase 8 (227 aa).

Over 1-35 the chain is Cytoplasmic; it reads MASFRIRQFQERDYKQVVDVFSRGMEEHIPTAFRH. Residues 36–56 form a helical; Signal-anchor for type II membrane protein membrane-spanning segment; sequence LLTLPRTLLLLAVVPLAIVLV. The Lumenal portion of the chain corresponds to 57–227; the sequence is SGSWFLAVVC…PLPSAQKYEL (171 aa). An N-acetyltransferase domain is found at 69–217; it reads FLFLFLWFLA…VDVSLIHFIY (149 aa).

The protein belongs to the NAT8 family. In terms of tissue distribution, expressed in brain (at protein level).

The protein localises to the endoplasmic reticulum-Golgi intermediate compartment membrane. It localises to the endoplasmic reticulum membrane. The enzyme catalyses L-lysyl-[protein] + acetyl-CoA = N(6)-acetyl-L-lysyl-[protein] + CoA + H(+). It carries out the reaction an S-substituted L-cysteine + acetyl-CoA = an N-acetyl-L-cysteine-S-conjugate + CoA + H(+). It functions in the pathway sulfur metabolism; glutathione metabolism. Endoplasmic reticulum (ER)-membrane-bound lysine N-acetyltransferase catalyzing the N6-acetylation of lysine residues in the lumen of the ER in various proteins, including PROM1 and BACE1, using acetyl-CoA as acetyl donor. Thereby, may regulate apoptosis through the acetylation and the regulation of the expression of PROM1. May also regulate amyloid beta-peptide secretion through acetylation of BACE1 and the regulation of its expression in neurons. N(6)-lysine acetylation in the ER maintains protein homeostasis and regulates reticulophagy. Alternatively, acetylates the free alpha-amino group of cysteine S-conjugates to form mercapturic acids. This is the final step in a major route for detoxification of a wide variety of reactive electrophiles which starts with their incorporation into glutathione S-conjugates. The glutathione S-conjugates are then further processed into cysteine S-conjugates and finally mercapturic acids which are water soluble and can be readily excreted in urine or bile. This chain is N-acetyltransferase 8 (Nat8), found in Mus musculus (Mouse).